Consider the following 674-residue polypeptide: Protein kinase C delta type (674 aa).

Residues 1–106 (MAPFLRISFN…KNNGKAEFWL (106 aa)) enclose the C2 domain. T43 and T50 each carry phosphothreonine. A Phosphotyrosine modification is found at Y64. S130 is modified (phosphoserine). The residue at position 141 (T141) is a Phosphothreonine. A Phosphotyrosine modification is found at Y155. The segment at 158 to 208 (NHEFIATFFGQPTFCSVCKEFVWGLNKQGYKCRQCNAAIHKKCIDKIIGRC) adopts a Phorbol-ester/DAG-type 1 zinc-finger fold. At T218 the chain carries Phosphothreonine. The Phorbol-ester/DAG-type 2 zinc-finger motif lies at 230-280 (PHRFKVYNYMSPTFCDHCGSLLWGLVKQGLKCEDCGMNVHHKCREKVANLC). Position 299 is a phosphoserine; by autocatalysis (S299). A phosphotyrosine; by SRC mark is found at Y311 and Y332. The Protein kinase domain maps to 347 to 601 (FTFQKVLGKG…TGNIRIHPFF (255 aa)). 353-361 (LGKGSFGKV) contacts ATP. Y372 is modified (phosphotyrosine). An ATP-binding site is contributed by K376. T449 carries the phosphothreonine modification. The active-site Proton acceptor is D471. Phosphoserine is present on S504. The residue at position 505 (T505) is a Phosphothreonine; by autocatalysis. Y565 carries the phosphotyrosine modification. The AGC-kinase C-terminal domain occupies 602-673 (KTINWSLLEK…VNPKFEQFLD (72 aa)). Phosphoserine occurs at positions 643, 652, and 662.

This sequence belongs to the protein kinase superfamily. AGC Ser/Thr protein kinase family. PKC subfamily. As to quaternary structure, interacts with PDPK1 (via N-terminal region). Interacts with RAD9A. Interacts with CDCP1. Interacts with MUC1. Interacts with VASP. Interacts with CAVIN3. Interacts with PRKD2 (via N-terminus and zing-finger domain 1 and 2) in response to oxidative stress; the interaction is independent of PRKD2 tyrosine phosphorylation. Interacts with PLSC3; interaction is enhanced by UV irradiation. Post-translationally, autophosphorylated and/or phosphorylated at Thr-505, within the activation loop; phosphorylation at Thr-505 is not a prerequisite for enzymatic activity. Autophosphorylated at Ser-299. Upon TNFSF10/TRAIL treatment, phosphorylated at Tyr-155; phosphorylation is required for its translocation to the endoplasmic reticulum and cleavage by caspase-3. Phosphorylated at Tyr-311, Tyr-332 and Tyr-565; phosphorylation of Tyr-311 and Tyr-565 following thrombin or zymosan stimulation potentiates its kinase activity. Phosphorylated by protein kinase PDPK1; phosphorylation is inhibited by the apoptotic C-terminal cleavage product of PKN2. Phosphorylated at Tyr-311 through a SYK and SRC mechanism downstream of C-type lectin receptors activation, promoting its activation. Proteolytically cleaved into a catalytic subunit and a regulatory subunit by caspase-3 during apoptosis which results in kinase activation. In terms of tissue distribution, isoform 1 is highly expressed in developing pro- and pre-B-cells and moderately in mature T-cells. Isoform 2 is highly expressed in testis and ovary and at a lower level in thymocytes, brain and kidney.

The protein resides in the cytoplasm. It localises to the perinuclear region. Its subcellular location is the nucleus. The protein localises to the cell membrane. It is found in the mitochondrion. The protein resides in the endomembrane system. It carries out the reaction L-seryl-[protein] + ATP = O-phospho-L-seryl-[protein] + ADP + H(+). The catalysed reaction is L-threonyl-[protein] + ATP = O-phospho-L-threonyl-[protein] + ADP + H(+). The enzyme catalyses L-tyrosyl-[protein] + ATP = O-phospho-L-tyrosyl-[protein] + ADP + H(+). With respect to regulation, novel PKCs (PRKCD, PRKCE, PRKCH and PRKCQ) are calcium-insensitive, but activated by diacylglycerol (DAG) and phosphatidylserine. Three specific sites; Thr-505 (activation loop of the kinase domain), Ser-643 (turn motif) and Ser-662 (hydrophobic region), need to be phosphorylated for its full activation. Activated by caspase-3 (CASP3) cleavage during apoptosis. After cleavage, the pseudosubstrate motif in the regulatory subunit is released from the substrate recognition site of the catalytic subunit, which enables PRKCD to become constitutively activated. The catalytic subunit which displays properties of a sphingosine-dependent protein kinase is activated by D-erythro-sphingosine (Sph) or N,N-dimethyl-D-erythrosphingosine (DMS) or N,N,N-trimethyl-D-erythrosphingosine (TMS), but not by ceramide or Sph-1-P and is strongly inhibited by phosphatidylserine. Its function is as follows. Calcium-independent, phospholipid- and diacylglycerol (DAG)-dependent serine/threonine-protein kinase that plays contrasting roles in cell death and cell survival by functioning as a pro-apoptotic protein during DNA damage-induced apoptosis, but acting as an anti-apoptotic protein during cytokine receptor-initiated cell death, is involved in tumor suppression, is required for oxygen radical production by NADPH oxidase and acts as a positive or negative regulator in platelet functional responses. Negatively regulates B cell proliferation and also has an important function in self-antigen induced B cell tolerance induction. Upon DNA damage, activates the promoter of the death-promoting transcription factor BCLAF1/Btf to trigger BCLAF1-mediated p53/TP53 gene transcription and apoptosis. In response to oxidative stress, interact with and activate CHUK/IKKA in the nucleus, causing the phosphorylation of p53/TP53. In the case of ER stress or DNA damage-induced apoptosis, can form a complex with the tyrosine-protein kinase ABL1 which trigger apoptosis independently of p53/TP53. In cytosol can trigger apoptosis by activating MAPK11 or MAPK14, inhibiting AKT1 and decreasing the level of X-linked inhibitor of apoptosis protein (XIAP), whereas in nucleus induces apoptosis via the activation of MAPK8 or MAPK9. Upon ionizing radiation treatment, is required for the activation of the apoptosis regulators BAX and BAK, which trigger the mitochondrial cell death pathway. Can phosphorylate MCL1 and target it for degradation which is sufficient to trigger for BAX activation and apoptosis. Is required for the control of cell cycle progression both at G1/S and G2/M phases. Mediates phorbol 12-myristate 13-acetate (PMA)-induced inhibition of cell cycle progression at G1/S phase by up-regulating the CDK inhibitor CDKN1A/p21 and inhibiting the cyclin CCNA2 promoter activity. In response to UV irradiation can phosphorylate CDK1, which is important for the G2/M DNA damage checkpoint activation. Can protect glioma cells from the apoptosis induced by TNFSF10/TRAIL, probably by inducing increased phosphorylation and subsequent activation of AKT1. Can also act as tumor suppressor upon mitogenic stimulation with PMA or TPA. In N-formyl-methionyl-leucyl-phenylalanine (fMLP)-treated cells, is required for NCF1 (p47-phox) phosphorylation and activation of NADPH oxidase activity, and regulates TNF-elicited superoxide anion production in neutrophils, by direct phosphorylation and activation of NCF1 or indirectly through MAPK1/3 (ERK1/2) signaling pathways. Involved in antifungal immunity by mediating phosphorylation and activation of CARD9 downstream of C-type lectin receptors activation, promoting interaction between CARD9 and BCL10, followed by activation of NF-kappa-B and MAP kinase p38 pathways. May also play a role in the regulation of NADPH oxidase activity in eosinophil after stimulation with IL5, leukotriene B4 or PMA. In collagen-induced platelet aggregation, acts a negative regulator of filopodia formation and actin polymerization by interacting with and negatively regulating VASP phosphorylation. Downstream of PAR1, PAR4 and CD36/GP4 receptors, regulates differentially platelet dense granule secretion; acts as a positive regulator in PAR-mediated granule secretion, whereas it negatively regulates CD36/GP4-mediated granule release. Phosphorylates MUC1 in the C-terminal and regulates the interaction between MUC1 and beta-catenin. The catalytic subunit phosphorylates 14-3-3 proteins (YWHAB, YWHAZ and YWHAH) in a sphingosine-dependent fashion. Phosphorylates ELAVL1 in response to angiotensin-2 treatment. Phosphorylates mitochondrial phospholipid scramblase 3 (PLSCR3), resulting in increased cardiolipin expression on the mitochondrial outer membrane which facilitates apoptosis. Phosphorylates SMPD1 which induces SMPD1 secretion. The polypeptide is Protein kinase C delta type (Mus musculus (Mouse)).